We begin with the raw amino-acid sequence, 430 residues long: Protein POLLENLESS 3-LIKE 2 (430 aa).

The interval 1 to 21 is disordered; it reads MMRDVFRPTKSAPCSPAKPLG. 6 TPR repeats span residues 40 to 73, 74 to 107, 110 to 143, 170 to 203, 205 to 236, and 238 to 257; these read DSPYVRAKNVQLVEKDPERAIPLFWKAINAGDRV, DSALKDMAIVMKQQNRAEEAIEAIKSLRVRCSDQ, ESLDNILLDLYKRCGRLDDQIGLLKHKLFLIQKG, TRLLGNLGWALMQRDNFVEAEDAYRRALSIAPDN, KMCNLGICLMKQGRIDEAKETLRRVKPAVVDG, and RGVDSHLKAYERAQQMLNDL. Residues 81–107 adopt a coiled-coil conformation; it reads AIVMKQQNRAEEAIEAIKSLRVRCSDQ. The tract at residues 346 to 376 is disordered; the sequence is KLKRTRSSSQGMGMLSGIGGDHEGETNTSTR.

It belongs to the MS5 protein family.

It is found in the nucleus. Its function is as follows. Probably involved in the regulation of cell division. This is Protein POLLENLESS 3-LIKE 2 from Arabidopsis thaliana (Mouse-ear cress).